We begin with the raw amino-acid sequence, 934 residues long: ATP-dependent RNA helicase dbp-10 (934 aa).

The segment at 21-43 (LFNNDSDFEDNSSKHHTKKGAVT) is disordered. A Q motif motif is present at residues 99-127 (GGFQAMGLNAHLLRAITRKGFSVPTPIQR). Positions 130–302 (IPLILERKDV…RAGLQEPSLV (173 aa)) constitute a Helicase ATP-binding domain. An ATP-binding site is contributed by 143 to 150 (ARTGSGKT). The DEAD box signature appears at 250-253 (DEAD). Disordered stretches follow at residues 343–370 (GPPE…NPKE), 613–722 (ELGP…FQDP), and 851–934 (GAQP…RQKR). Residues 359 to 513 (KRKREYRPNP…KNPSFAADVV (155 aa)) form the Helicase C-terminal domain. Composition is skewed to acidic residues over residues 644–654 (DEDDEDVDMED) and 662–700 (EETN…DSEM). The span at 864 to 926 (EKAPKDADKF…VAEKKREKNA (63 aa)) shows a compositional bias: basic and acidic residues.

Belongs to the DEAD box helicase family. DDX54/DBP10 subfamily.

The protein localises to the nucleus. Its subcellular location is the nucleolus. The enzyme catalyses ATP + H2O = ADP + phosphate + H(+). Functionally, ATP-binding RNA helicase involved in the biogenesis of 60S ribosomal subunits and is required for the normal formation of 25S and 5.8S rRNAs. This Neurospora crassa (strain ATCC 24698 / 74-OR23-1A / CBS 708.71 / DSM 1257 / FGSC 987) protein is ATP-dependent RNA helicase dbp-10 (dbp-10).